Consider the following 39-residue polypeptide: Photosystem II reaction center protein J (39 aa).

Residues 7-27 (IPLWLVGLVGGLAVITMLSLF) form a helical membrane-spanning segment.

Belongs to the PsbJ family. As to quaternary structure, PSII is composed of 1 copy each of membrane proteins PsbA, PsbB, PsbC, PsbD, PsbE, PsbF, PsbH, PsbI, PsbJ, PsbK, PsbL, PsbM, PsbT, PsbX, PsbY, PsbZ, Psb30/Ycf12, at least 3 peripheral proteins of the oxygen-evolving complex and a large number of cofactors. It forms dimeric complexes.

Its subcellular location is the plastid. The protein resides in the chloroplast thylakoid membrane. In terms of biological role, one of the components of the core complex of photosystem II (PSII). PSII is a light-driven water:plastoquinone oxidoreductase that uses light energy to abstract electrons from H(2)O, generating O(2) and a proton gradient subsequently used for ATP formation. It consists of a core antenna complex that captures photons, and an electron transfer chain that converts photonic excitation into a charge separation. This Trieres chinensis (Marine centric diatom) protein is Photosystem II reaction center protein J.